The sequence spans 737 residues: Polyribonucleotide nucleotidyltransferase (737 aa).

D489 and D495 together coordinate Mg(2+). A KH domain is found at 556–615; it reads PKIDTIKIDVDKIKIVIGKGGETIDKIIAETGVKIDIDEEGNVSIYSSDQDAINRAKEII. The 69-residue stretch at 625–693 folds into the S1 motif domain; sequence DEVYRAKVVR…EKGRIDASMK (69 aa). The disordered stretch occupies residues 691-737; sequence SMKALLPRPPKPEHDEKGEKSERPHRPRHHKDHKPKKEFTETPKDSE. The span at 700-714 shows a compositional bias: basic and acidic residues; it reads PKPEHDEKGEKSERP. Residues 715 to 724 show a composition bias toward basic residues; that stretch reads HRPRHHKDHK. Residues 725-737 are compositionally biased toward basic and acidic residues; that stretch reads PKKEFTETPKDSE.

The protein belongs to the polyribonucleotide nucleotidyltransferase family. Mg(2+) is required as a cofactor.

The protein localises to the cytoplasm. The catalysed reaction is RNA(n+1) + phosphate = RNA(n) + a ribonucleoside 5'-diphosphate. Functionally, involved in mRNA degradation. Catalyzes the phosphorolysis of single-stranded polyribonucleotides processively in the 3'- to 5'-direction. This chain is Polyribonucleotide nucleotidyltransferase, found in Streptococcus pneumoniae serotype 19F (strain G54).